The primary structure comprises 193 residues: Putative protein-glutamate methylesterase/protein-glutamine glutaminase (193 aa).

The 179-residue stretch at 1–179 folds into the CheB-type methylesterase domain; that stretch reads MNYEAIVIGV…DYVLSLEKIA (179 aa). Residues S11, H38, and D131 contribute to the active site.

It belongs to the CheB family.

It is found in the cytoplasm. It carries out the reaction [protein]-L-glutamate 5-O-methyl ester + H2O = L-glutamyl-[protein] + methanol + H(+). It catalyses the reaction L-glutaminyl-[protein] + H2O = L-glutamyl-[protein] + NH4(+). May be involved in chemotaxis. This chain is Putative protein-glutamate methylesterase/protein-glutamine glutaminase (cheB2), found in Leptospira interrogans serogroup Icterohaemorrhagiae serovar copenhageni (strain Fiocruz L1-130).